A 384-amino-acid chain; its full sequence is 8-amino-7-oxononanoate synthase (384 aa).

Arg-21 contacts substrate. 108 to 109 serves as a coordination point for pyridoxal 5'-phosphate; it reads GF. Substrate is bound at residue His-133. Pyridoxal 5'-phosphate is bound by residues Ser-179, His-207, and Thr-233. Lys-236 carries the post-translational modification N6-(pyridoxal phosphate)lysine. Thr-352 contributes to the substrate binding site.

It belongs to the class-II pyridoxal-phosphate-dependent aminotransferase family. BioF subfamily. In terms of assembly, homodimer. It depends on pyridoxal 5'-phosphate as a cofactor.

It catalyses the reaction 6-carboxyhexanoyl-[ACP] + L-alanine + H(+) = (8S)-8-amino-7-oxononanoate + holo-[ACP] + CO2. It functions in the pathway cofactor biosynthesis; biotin biosynthesis. Functionally, catalyzes the decarboxylative condensation of pimeloyl-[acyl-carrier protein] and L-alanine to produce 8-amino-7-oxononanoate (AON), [acyl-carrier protein], and carbon dioxide. The polypeptide is 8-amino-7-oxononanoate synthase (Escherichia coli (strain SE11)).